The following is a 160-amino-acid chain: SsrA-binding protein (160 aa).

Residues 131–160 form a disordered region; it reads KKEYDKRDTERERDAGRELQRAVRNKGKED.

It belongs to the SmpB family.

The protein localises to the cytoplasm. Functionally, required for rescue of stalled ribosomes mediated by trans-translation. Binds to transfer-messenger RNA (tmRNA), required for stable association of tmRNA with ribosomes. tmRNA and SmpB together mimic tRNA shape, replacing the anticodon stem-loop with SmpB. tmRNA is encoded by the ssrA gene; the 2 termini fold to resemble tRNA(Ala) and it encodes a 'tag peptide', a short internal open reading frame. During trans-translation Ala-aminoacylated tmRNA acts like a tRNA, entering the A-site of stalled ribosomes, displacing the stalled mRNA. The ribosome then switches to translate the ORF on the tmRNA; the nascent peptide is terminated with the 'tag peptide' encoded by the tmRNA and targeted for degradation. The ribosome is freed to recommence translation, which seems to be the essential function of trans-translation. The protein is SsrA-binding protein of Pseudomonas fluorescens (strain Pf0-1).